Here is a 154-residue protein sequence, read N- to C-terminus: RING finger protein 11 (154 aa).

The segment covering 1-12 (MGNCLKSPTSDD) has biased composition (polar residues). The tract at residues 1-53 (MGNCLKSPTSDDISLLHESQSDRASFGEGTEPDQEPPPPYQEQVPVPVYHPTP) is disordered. Glycine 2 carries the N-myristoyl glycine lipid modification. A lipid anchor (S-palmitoyl cysteine) is attached at cysteine 4. Phosphoserine is present on residues serine 14 and serine 25. The PPxY motif motif lies at 37-40 (PPPY). The span at 41–51 (QEQVPVPVYHP) shows a compositional bias: low complexity. The segment at 99-140 (CVICMMDFVYGDPIRFLPCMHIYHLDCIDDWLMRSFTCPSCM) adopts an RING-type zinc-finger fold. Threonine 135 is modified (phosphothreonine; by PKB/AKT1).

Interacts (when phosphorylated) with 14-3-3. Interacts with the E3 ubiquitin-ligases NEDD4, ITCH, SMURF2 and WWP1. Also interacts with the E2 ubiquitin-conjugating enzymes UBE2D1 and UBE2N, but neither with CDC34, nor with UBE2L3. Interacts with ZNF350, EPS15 and STAMBP. After TNF stimulation, interacts with TAX1BP1, TNFAIP3 and RIPK1; these interactions are transient and they are lost after 1 hour of stimulation with TNF. Interacts with GGA1. In terms of processing, ubiquitinated in the presence of ITCH, SMURF2 and UBE2D1, as well as WWP1. Post-translationally, phosphorylation by PKB/AKT1 may accelerate degradation by the proteasome. Acylation at both Gly-2 and Cys-4 is required for proper localization to the endosomes.

The protein localises to the early endosome. Its subcellular location is the recycling endosome. The protein resides in the cytoplasm. It localises to the nucleus. Functionally, essential component of a ubiquitin-editing protein complex, comprising also TNFAIP3, ITCH and TAX1BP1, that ensures the transient nature of inflammatory signaling pathways. Promotes the association of TNFAIP3 to RIPK1 after TNF stimulation. TNFAIP3 deubiquitinates 'Lys-63' polyubiquitin chains on RIPK1 and catalyzes the formation of 'Lys-48'-polyubiquitin chains. This leads to RIPK1 proteasomal degradation and consequently termination of the TNF- or LPS-mediated activation of NF-kappa-B. Recruits STAMBP to the E3 ubiquitin-ligase SMURF2 for ubiquitination, leading to its degradation by the 26S proteasome. The polypeptide is RING finger protein 11 (RNF11) (Bos taurus (Bovine)).